A 277-amino-acid polypeptide reads, in one-letter code: PHD finger protein ALFIN-LIKE 9 (277 aa).

Disordered stretches follow at residues 138-206 (KSKA…EEEH) and 255-277 (PSCS…ARPS). A compositionally biased stretch (low complexity) spans 145–160 (SANNHSNSKSKSSNKT). The PHD-type zinc-finger motif lies at 208 to 260 (ETLCGACGESYGADEFWICCDICEKWFHGKCVKITPAKAEHIKQYKCPSCSGG). Residues 259-270 (GGNGGGGGGSGN) are compositionally biased toward gly residues.

It belongs to the Alfin family. As to quaternary structure, interacts with H3K4me3 and to a lesser extent with H3K4me2.

The protein localises to the nucleus. In terms of biological role, histone-binding component that specifically recognizes H3 tails trimethylated on 'Lys-4' (H3K4me3), which mark transcription start sites of virtually all active genes. This chain is PHD finger protein ALFIN-LIKE 9, found in Oryza sativa subsp. indica (Rice).